The chain runs to 411 residues: Elongation factor Tu, apicoplast (411 aa).

The region spanning 10–214 (KPHVNIGTIG…TVDSYIEKPE (205 aa)) is the tr-type G domain. Residues 19–26 (GHVDHGKT) form a G1 region. 19 to 26 (GHVDHGKT) lines the GTP pocket. A Mg(2+)-binding site is contributed by threonine 26. A G2 region spans residues 61-65 (GITIN). The G3 stretch occupies residues 82 to 85 (DCPG). GTP contacts are provided by residues 82–86 (DCPGH) and 137–140 (NKED). Positions 137-140 (NKED) are G4. Residues 175–177 (SAL) are G5.

This sequence belongs to the TRAFAC class translation factor GTPase superfamily. Classic translation factor GTPase family. EF-Tu/EF-1A subfamily.

The protein localises to the plastid. It localises to the apicoplast. The enzyme catalyses GTP + H2O = GDP + phosphate + H(+). Functionally, GTP hydrolase that promotes the GTP-dependent binding of aminoacyl-tRNA to the A-site of ribosomes during protein biosynthesis. The chain is Elongation factor Tu, apicoplast (tufA) from Theileria parva (East coast fever infection agent).